We begin with the raw amino-acid sequence, 119 residues long: Probable prefoldin subunit 6 (119 aa).

This sequence belongs to the prefoldin subunit beta family. As to quaternary structure, heterohexamer of two PFD-alpha type and four PFD-beta type subunits. May interact with MSP1.

Its function is as follows. Binds specifically to cytosolic chaperonin (c-CPN) and transfers target proteins to it. Binds to nascent polypeptide chain and promotes folding in an environment in which there are many competing pathways for nonnative proteins. This is Probable prefoldin subunit 6 from Plasmodium falciparum (isolate 3D7).